The primary structure comprises 204 residues: Putative AgrB-like protein (204 aa).

Transmembrane regions (helical) follow at residues 52–74 (YGIALVTGLLLQTVTVHLSYLWL), 87–107 (LNCTLISLLMFVLAPFVFQNI), 111–131 (NWIVLGTFGFILLNMFLFAPA), 151–168 (AMIGTLILTGIALLIPFA), and 173–190 (LIMVGSLFQVISINPLTY).

It belongs to the AgrB family.

Its subcellular location is the cell membrane. Its function is as follows. May be involved in the proteolytic processing of a quorum sensing system signal molecule precursor. The sequence is that of Putative AgrB-like protein from Listeria monocytogenes serovar 1/2a (strain ATCC BAA-679 / EGD-e).